The primary structure comprises 114 residues: MSYKPNLTAHMPAAALNAGSVHSPSTSMATSSQYRQLLSDYGPPSLGYTQGTGNSQVPQSKYAELLAIIEELGKEIRPTYAGSKSAMERLKRGIIHARSLVRECLAETERNARS.

Residues 18-57 (AGSVHSPSTSMATSSQYRQLLSDYGPPSLGYTQGTGNSQV) form a disordered region. The interval 19–24 (GSVHSP) is interaction with CDK2AP2. Over residues 20 to 36 (SVHSPSTSMATSSQYRQ) the composition is skewed to polar residues. The residue at position 45 (Ser45) is a Phosphoserine; by IKKE. Residues 47–57 (GYTQGTGNSQV) show a composition bias toward polar residues.

The protein belongs to the CDK2AP family. Homodimer. Component of the nucleosome remodeling and deacetylase (NuRD) repressor complex, composed of core proteins MTA1, MTA2, MTA3, RBBP4, RBBP7, HDAC1, HDAC2, MBD2, MBD3, and peripherally associated proteins CDK2AP1, CDK2AP2, GATAD2A, GATAD2B, CHD3, CHD4 and CHD5. The exact stoichiometry of the NuRD complex is unknown, and some subunits such as MBD2 and MBD3, GATAD2A and GATAD2B, and CHD3, CHD4 and CHD5 define mutually exclusive NuRD complexes. Interacts with monomeric unphosphorylated CDK2. Interacts with CDK2AP2. Interacts with GATAD2A. Interacts with HDAC1. Interacts with HDAC2. Interacts with MBD2. Interacts with MBD3. Interacts with RBBP4. Interacts with RBBP7. In terms of processing, phosphorylated in vitro by IKBKE at Ser-45.

It is found in the nucleus. The protein resides in the chromosome. Functionally, inhibitor of cyclin-dependent kinase CDK2. Also acts as a component of the histone deacetylase NuRD complex which participates in the remodeling of chromatin. The sequence is that of Cyclin-dependent kinase 2-associated protein 1 (Cdk2ap1) from Mus musculus (Mouse).